A 67-amino-acid polypeptide reads, in one-letter code: UPF0434 protein Tcr_0959 (67 aa).

The protein belongs to the UPF0434 family.

The protein is UPF0434 protein Tcr_0959 of Hydrogenovibrio crunogenus (strain DSM 25203 / XCL-2) (Thiomicrospira crunogena).